We begin with the raw amino-acid sequence, 44 residues long: Somatoliberin (44 aa).

L44 is modified (leucine amide).

This sequence belongs to the glucagon family.

It localises to the secreted. GRF is released by the hypothalamus and acts on the adenohypophyse to stimulate the secretion of growth hormone. The protein is Somatoliberin (GHRH) of Ovis aries (Sheep).